We begin with the raw amino-acid sequence, 363 residues long: Protein RecA (363 aa).

79-86 (GPESSGKT) serves as a coordination point for ATP.

Belongs to the RecA family.

It is found in the cytoplasm. Can catalyze the hydrolysis of ATP in the presence of single-stranded DNA, the ATP-dependent uptake of single-stranded DNA by duplex DNA, and the ATP-dependent hybridization of homologous single-stranded DNAs. It interacts with LexA causing its activation and leading to its autocatalytic cleavage. In Methylobacterium sp. (strain 4-46), this protein is Protein RecA.